We begin with the raw amino-acid sequence, 514 residues long: Ras-GEF domain-containing family member 1B-A (514 aa).

An N-terminal Ras-GEF domain is found at 76 to 206 (HDNNLISGSL…MTQTLIRKLT (131 aa)). A Ras-GEF domain is found at 246–494 (DPFTLAQQLT…YLASYESEGP (249 aa)).

In terms of tissue distribution, detected in oocytes, and in embryos at 4 to 120 hours post-fertilization (hpf). Detected along marginal blastomeres at early epiboly stage and throughout the margin at the onset of gastrulation. At 60% epiboly, strongest expression is found in the dorsal shield region and is restricted to the epiblast. Detected in the anterior border of the presomitic mesoderm at the end of epiboly. Detected in adaxial cells, in the somites and in the nervous system during somitogenesis. Detected in diencephalon and hindbrain and in cells surrounding the notochord, including adaxial cells and ventral mesendoderm, in 15-somite stage embryos. At 48 hpf, detected mainly in the brain.

Its function is as follows. Guanine nucleotide exchange factor (GEF) for Ras family proteins (in vitro). This chain is Ras-GEF domain-containing family member 1B-A (rasgef1ba), found in Danio rerio (Zebrafish).